The primary structure comprises 218 residues: Large ribosomal subunit protein uL3 (218 aa).

This sequence belongs to the universal ribosomal protein uL3 family. In terms of assembly, part of the 50S ribosomal subunit. Forms a cluster with proteins L14 and L19.

In terms of biological role, one of the primary rRNA binding proteins, it binds directly near the 3'-end of the 23S rRNA, where it nucleates assembly of the 50S subunit. This is Large ribosomal subunit protein uL3 from Syntrophus aciditrophicus (strain SB).